The following is a 243-amino-acid chain: 3-deoxy-manno-octulosonate cytidylyltransferase (243 aa).

The protein belongs to the KdsB family.

It is found in the cytoplasm. It carries out the reaction 3-deoxy-alpha-D-manno-oct-2-ulosonate + CTP = CMP-3-deoxy-beta-D-manno-octulosonate + diphosphate. The protein operates within nucleotide-sugar biosynthesis; CMP-3-deoxy-D-manno-octulosonate biosynthesis; CMP-3-deoxy-D-manno-octulosonate from 3-deoxy-D-manno-octulosonate and CTP: step 1/1. It functions in the pathway bacterial outer membrane biogenesis; lipopolysaccharide biosynthesis. In terms of biological role, activates KDO (a required 8-carbon sugar) for incorporation into bacterial lipopolysaccharide in Gram-negative bacteria. This is 3-deoxy-manno-octulosonate cytidylyltransferase from Helicobacter acinonychis (strain Sheeba).